The following is a 201-amino-acid chain: Ras-related protein Rab-9A (201 aa).

The residue at position 2 (Ala-2) is an N-acetylalanine. Gly-17 contacts GDP. Positions 17, 18, 19, 20, 21, 22, 34, 38, and 39 each coordinate GTP. 4 residues coordinate GDP: Gly-19, Lys-20, Ser-21, and Ser-22. Position 21 (Ser-21) interacts with Mg(2+). A Switch 1 motif is present at residues 31–42; sequence KFDTQLFHTIGV. Residues Thr-39 and Asp-62 each contribute to the Mg(2+) site. Positions 64–78 match the Switch 2 motif; the sequence is AGQERFRSLRTPFYR. Positions 65, 124, 125, 127, 155, and 156 each coordinate GTP. The GDP site is built by Asn-124, Lys-125, Asp-127, Ala-155, and Lys-156. At Ser-179 the chain carries Phosphoserine. At Thr-187 the chain carries Phosphothreonine. Residues Cys-200 and Cys-201 are each lipidated (S-geranylgeranyl cysteine).

The protein belongs to the small GTPase superfamily. Rab family. Interacts (preferentially in its GTP-bound form) with GCC2 (via its GRIP domain). Interacts (GTP-bound form) with SGSM1; the GDP-bound form has much lower affinity for SGSM1. Interacts with SGSM2. The GTP-bound form but not the GDP-bound form interacts with HPS4 and BLOC-3 complex (heterodimer of HPS1 and HPS4) but does not interact with HPS1 alone. Interacts (GTP-bound form) with NDE1; two RAB9A-GTP molecules lie on the opposite sides of the NDE1 homodimer; the interaction leads to RAB9A-dynein motor tethering. Interacts (GTP-bound form) with NDEL1. It depends on Mg(2+) as a cofactor.

It is found in the cell membrane. Its subcellular location is the endoplasmic reticulum membrane. It localises to the golgi apparatus membrane. The protein localises to the late endosome. The protein resides in the cytoplasmic vesicle. It is found in the phagosome membrane. Its subcellular location is the phagosome. It localises to the cytoplasmic vesicle membrane. The protein localises to the melanosome. The enzyme catalyses GTP + H2O = GDP + phosphate + H(+). Its activity is regulated as follows. Regulated by guanine nucleotide exchange factors (GEFs) which promote the exchange of bound GDP for free GTP. Regulated by GTPase activating proteins (GAPs) which increase the GTP hydrolysis activity. Inhibited by GDP dissociation inhibitors (GDIs). In terms of biological role, the small GTPases Rab are key regulators of intracellular membrane trafficking, from the formation of transport vesicles to their fusion with membranes. Rabs cycle between an inactive GDP-bound form and an active GTP-bound form that is able to recruit to membranes different sets of downstream effectors directly responsible for vesicle formation, movement, tethering and fusion. RAB9A is involved in the transport of proteins between the endosomes and the trans-Golgi network (TGN). Specifically uses NDE1/NDEL1 as an effector to interact with the dynein motor complex in order to control retrograde trafficking of RAB9-associated late endosomes to the TGN. Involved in the recruitment of SGSM2 to melanosomes and is required for the proper trafficking of melanogenic enzymes TYR, TYRP1 and DCT/TYRP2 to melanosomes in melanocytes. In Homo sapiens (Human), this protein is Ras-related protein Rab-9A.